The following is a 491-amino-acid chain: Probable cytosol aminopeptidase (491 aa).

Mn(2+) is bound by residues Lys-260 and Asp-265. Lys-272 is a catalytic residue. Mn(2+) is bound by residues Asp-284, Asp-343, and Glu-345. Arg-347 is a catalytic residue.

This sequence belongs to the peptidase M17 family. Mn(2+) is required as a cofactor.

It localises to the cytoplasm. The catalysed reaction is Release of an N-terminal amino acid, Xaa-|-Yaa-, in which Xaa is preferably Leu, but may be other amino acids including Pro although not Arg or Lys, and Yaa may be Pro. Amino acid amides and methyl esters are also readily hydrolyzed, but rates on arylamides are exceedingly low.. The enzyme catalyses Release of an N-terminal amino acid, preferentially leucine, but not glutamic or aspartic acids.. Its function is as follows. Presumably involved in the processing and regular turnover of intracellular proteins. Catalyzes the removal of unsubstituted N-terminal amino acids from various peptides. This Trichormus variabilis (strain ATCC 29413 / PCC 7937) (Anabaena variabilis) protein is Probable cytosol aminopeptidase.